A 131-amino-acid chain; its full sequence is Agouti-signaling protein (131 aa).

The signal sequence occupies residues 1–20; that stretch reads MNIFRLLLATLLVSLCFLTA. N-linked (GlcNAc...) asparagine glycosylation is present at asparagine 38. The tract at residues 57–104 is disordered; sequence KSKKISRKEAEKKRSSKKKASMKNVARPRPPPPNPCVATRNSCKSPAP. 5 disulfide bridges follow: cysteine 92-cysteine 107, cysteine 99-cysteine 113, cysteine 106-cysteine 124, cysteine 110-cysteine 131, and cysteine 115-cysteine 122. An Agouti domain is found at 92–131; the sequence is CVATRNSCKSPAPACCDPCASCQCRFFRSACTCRVLSPSC.

It localises to the secreted. Involved in the regulation of melanogenesis. The binding of ASP to MC1R precludes alpha-MSH initiated signaling and thus blocks production of cAMP, leading to a down-regulation of eumelanogenesis (brown/black pigment) and thus increasing synthesis of pheomelanin (yellow/red pigment). This is Agouti-signaling protein (ASIP) from Vulpes vulpes (Red fox).